A 427-amino-acid polypeptide reads, in one-letter code: Serine--tRNA ligase (427 aa).

L-serine is bound at residue 231 to 233 (TAE). Residue 262 to 264 (RSE) participates in ATP binding. Glu285 is a binding site for L-serine. 349–352 (EISS) lines the ATP pocket. Residue Ser385 coordinates L-serine.

Belongs to the class-II aminoacyl-tRNA synthetase family. Type-1 seryl-tRNA synthetase subfamily. Homodimer. The tRNA molecule binds across the dimer.

The protein resides in the cytoplasm. The enzyme catalyses tRNA(Ser) + L-serine + ATP = L-seryl-tRNA(Ser) + AMP + diphosphate + H(+). It carries out the reaction tRNA(Sec) + L-serine + ATP = L-seryl-tRNA(Sec) + AMP + diphosphate + H(+). It functions in the pathway aminoacyl-tRNA biosynthesis; selenocysteinyl-tRNA(Sec) biosynthesis; L-seryl-tRNA(Sec) from L-serine and tRNA(Sec): step 1/1. Catalyzes the attachment of serine to tRNA(Ser). Is also able to aminoacylate tRNA(Sec) with serine, to form the misacylated tRNA L-seryl-tRNA(Sec), which will be further converted into selenocysteinyl-tRNA(Sec). The sequence is that of Serine--tRNA ligase from Rhizobium leguminosarum bv. trifolii (strain WSM2304).